A 126-amino-acid chain; its full sequence is Large ribosomal subunit protein bL12 (126 aa).

The protein belongs to the bacterial ribosomal protein bL12 family. As to quaternary structure, homodimer. Part of the ribosomal stalk of the 50S ribosomal subunit. Forms a multimeric L10(L12)X complex, where L10 forms an elongated spine to which 2 to 4 L12 dimers bind in a sequential fashion. Binds GTP-bound translation factors.

Functionally, forms part of the ribosomal stalk which helps the ribosome interact with GTP-bound translation factors. Is thus essential for accurate translation. This is Large ribosomal subunit protein bL12 from Methylocella silvestris (strain DSM 15510 / CIP 108128 / LMG 27833 / NCIMB 13906 / BL2).